The chain runs to 188 residues: Translation initiation factor IF-3 (188 aa).

The protein belongs to the IF-3 family. As to quaternary structure, monomer.

Its subcellular location is the cytoplasm. Its function is as follows. IF-3 binds to the 30S ribosomal subunit and shifts the equilibrium between 70S ribosomes and their 50S and 30S subunits in favor of the free subunits, thus enhancing the availability of 30S subunits on which protein synthesis initiation begins. In Fusobacterium nucleatum subsp. nucleatum (strain ATCC 25586 / DSM 15643 / BCRC 10681 / CIP 101130 / JCM 8532 / KCTC 2640 / LMG 13131 / VPI 4355), this protein is Translation initiation factor IF-3.